Consider the following 229-residue polypeptide: MAEDFGFFSSSESGAPEAAEEDPAAAFLAQQESEIAGIENDPGFGAPAASQVASAQPGLASGAGSEDMSTTVNGDVFQEANGPADGYAAIAQADRLTQEPESIRKWREEQKKRLQELDAASKVTEQEWREKAKKDLEEWNQRQSEQVEKNKINNRIADKAFYQQPDADTIGYVASEEAFVKESKEETPGTEWEKVAQLCDFNPKSSKQCKDVSRLRSVLMSLKQTPLSR.

Low complexity-rich tracts occupy residues 1 to 17 and 45 to 58; these read MAED…GAPE and GAPA…AQPG. Residues 1-70 form a disordered region; sequence MAEDFGFFSS…SGAGSEDMST (70 aa). 2 positions are modified to phosphoserine: Ser-11 and Ser-13. An involved in binding clathrin heavy chain region spans residues 93–155; it reads ADRLTQEPES…QVEKNKINNR (63 aa). Thr-187 carries the post-translational modification Phosphothreonine. Cys-199 and Cys-209 form a disulfide bridge. At Lys-204 the chain carries N6-acetyllysine. Ser-217 is subject to Phosphoserine.

The protein belongs to the clathrin light chain family. As to quaternary structure, clathrin coats are formed from molecules containing 3 heavy chains and 3 light chains. Interacts (via N-terminus) with HIP1. Interacts with HIP1R.

It is found in the cytoplasmic vesicle membrane. The protein localises to the membrane. Its subcellular location is the coated pit. Functionally, clathrin is the major protein of the polyhedral coat of coated pits and vesicles. In Mus musculus (Mouse), this protein is Clathrin light chain B (Cltb).